Here is a 186-residue protein sequence, read N- to C-terminus: MPSAHSVKLRPLEREDLRYVHQLDNNASVMRYWFEEPYEAFVELSDLYDKHIHDQSERRFVVECDGEKAGLVELVEINHVHRRAEFQIIISPEYQGKGLATRAAKLAMDYGFTVLNLYKLYLIVDKENEKAIHIYRKLGFSVEGELMHEFFINGQYRNAIRMCIFQHQYLAEHKTPGQTLLKPTAQ.

Residues valine 7 to histidine 167 enclose the N-acetyltransferase domain. Spermine-binding positions include methionine 30, glutamate 35, glutamate 43, and histidine 51 to aspartate 54. Mg(2+) is bound at residue glutamate 35. Residues glutamate 35 and glutamate 43 each coordinate spermidine. Glutamate 76 serves as a coordination point for Mg(2+). Glutamate 85–glutamine 87 lines the spermine pocket. Acetyl-CoA contacts are provided by residues isoleucine 88–isoleucine 90, glutamine 95–threonine 101, and asparagine 128–lysine 137. Tyrosine 135 serves as the catalytic Proton donor.

This sequence belongs to the acetyltransferase family. In terms of assembly, homododecamer.

Its subcellular location is the cytoplasm. The catalysed reaction is an alkane-alpha,omega-diamine + acetyl-CoA = an N-acetylalkane-alpha,omega-diamine + CoA + H(+). The enzyme catalyses spermidine + acetyl-CoA = N(1)-acetylspermidine + CoA + H(+). It catalyses the reaction spermidine + acetyl-CoA = N(8)-acetylspermidine + CoA + H(+). It carries out the reaction spermine + acetyl-CoA = N(1)-acetylspermine + CoA + H(+). It participates in amine and polyamine degradation; spermidine degradation. The protein operates within amine and polyamine degradation; spermine degradation. Its function is as follows. Involved in the protection against polyamine toxicity by regulating their concentration. Catalyzes the transfer of an acetyl group from acetyl coenzyme A (AcCoA) to the primary amino groups of spermidine to yield N(1)- and N(8)-acetylspermidine. It can also use spermine. The chain is Spermidine N(1)-acetyltransferase (speG) from Escherichia coli O157:H7.